Reading from the N-terminus, the 287-residue chain is Phosphatidylserine decarboxylase proenzyme (287 aa).

Catalysis depends on charge relay system; for autoendoproteolytic cleavage activity residues D89, H146, and S252. The active-site Schiff-base intermediate with substrate; via pyruvic acid; for decarboxylase activity is the S252. S252 carries the post-translational modification Pyruvic acid (Ser); by autocatalysis.

Belongs to the phosphatidylserine decarboxylase family. PSD-B subfamily. Prokaryotic type I sub-subfamily. In terms of assembly, heterodimer of a large membrane-associated beta subunit and a small pyruvoyl-containing alpha subunit. Pyruvate serves as cofactor. Is synthesized initially as an inactive proenzyme. Formation of the active enzyme involves a self-maturation process in which the active site pyruvoyl group is generated from an internal serine residue via an autocatalytic post-translational modification. Two non-identical subunits are generated from the proenzyme in this reaction, and the pyruvate is formed at the N-terminus of the alpha chain, which is derived from the carboxyl end of the proenzyme. The autoendoproteolytic cleavage occurs by a canonical serine protease mechanism, in which the side chain hydroxyl group of the serine supplies its oxygen atom to form the C-terminus of the beta chain, while the remainder of the serine residue undergoes an oxidative deamination to produce ammonia and the pyruvoyl prosthetic group on the alpha chain. During this reaction, the Ser that is part of the protease active site of the proenzyme becomes the pyruvoyl prosthetic group, which constitutes an essential element of the active site of the mature decarboxylase.

It localises to the cell membrane. It carries out the reaction a 1,2-diacyl-sn-glycero-3-phospho-L-serine + H(+) = a 1,2-diacyl-sn-glycero-3-phosphoethanolamine + CO2. It participates in phospholipid metabolism; phosphatidylethanolamine biosynthesis; phosphatidylethanolamine from CDP-diacylglycerol: step 2/2. Functionally, catalyzes the formation of phosphatidylethanolamine (PtdEtn) from phosphatidylserine (PtdSer). The polypeptide is Phosphatidylserine decarboxylase proenzyme (Shewanella halifaxensis (strain HAW-EB4)).